A 338-amino-acid polypeptide reads, in one-letter code: 3-dehydroquinate synthase (338 aa).

NAD(+) is bound by residues 58–63 (DGERAK), 92–96 (GTTGD), 116–117 (TT), Lys-129, and Lys-138. Glu-169, His-229, and His-245 together coordinate Zn(2+).

Belongs to the sugar phosphate cyclases superfamily. Dehydroquinate synthase family. It depends on NAD(+) as a cofactor. Requires Co(2+) as cofactor. Zn(2+) serves as cofactor.

The protein resides in the cytoplasm. It catalyses the reaction 7-phospho-2-dehydro-3-deoxy-D-arabino-heptonate = 3-dehydroquinate + phosphate. Its pathway is metabolic intermediate biosynthesis; chorismate biosynthesis; chorismate from D-erythrose 4-phosphate and phosphoenolpyruvate: step 2/7. Functionally, catalyzes the conversion of 3-deoxy-D-arabino-heptulosonate 7-phosphate (DAHP) to dehydroquinate (DHQ). The protein is 3-dehydroquinate synthase of Picrophilus torridus (strain ATCC 700027 / DSM 9790 / JCM 10055 / NBRC 100828 / KAW 2/3).